The following is a 251-amino-acid chain: Small ribosomal subunit protein uS3 (251 aa).

The KH type-2 domain occupies Ile39–Ile109. Positions Leu222–Ser239 are enriched in basic and acidic residues. The disordered stretch occupies residues Leu222 to Thr251. Basic residues predominate over residues Arg240–Thr251.

This sequence belongs to the universal ribosomal protein uS3 family. Part of the 30S ribosomal subunit. Forms a tight complex with proteins S10 and S14.

Functionally, binds the lower part of the 30S subunit head. Binds mRNA in the 70S ribosome, positioning it for translation. The sequence is that of Small ribosomal subunit protein uS3 from Prosthecochloris aestuarii (strain DSM 271 / SK 413).